The sequence spans 580 residues: NADH-quinone oxidoreductase subunit C/D (580 aa).

An NADH dehydrogenase I subunit C region spans residues 1–171; the sequence is MSLDQAIPEA…PPFVLTDRLF (171 aa). Positions 195–580 are NADH dehydrogenase I subunit D; sequence ELMVLNFGPH…IDFVMSDVDR (386 aa).

In the N-terminal section; belongs to the complex I 30 kDa subunit family. This sequence in the C-terminal section; belongs to the complex I 49 kDa subunit family. NDH-1 is composed of 13 different subunits. Subunits NuoB, CD, E, F, and G constitute the peripheral sector of the complex.

The protein resides in the cell inner membrane. The enzyme catalyses a quinone + NADH + 5 H(+)(in) = a quinol + NAD(+) + 4 H(+)(out). In terms of biological role, NDH-1 shuttles electrons from NADH, via FMN and iron-sulfur (Fe-S) centers, to quinones in the respiratory chain. The immediate electron acceptor for the enzyme in this species is believed to be ubiquinone. Couples the redox reaction to proton translocation (for every two electrons transferred, four hydrogen ions are translocated across the cytoplasmic membrane), and thus conserves the redox energy in a proton gradient. In Cereibacter sphaeroides (strain ATCC 17029 / ATH 2.4.9) (Rhodobacter sphaeroides), this protein is NADH-quinone oxidoreductase subunit C/D.